The sequence spans 212 residues: Imidazole glycerol phosphate synthase subunit HisH (212 aa).

One can recognise a Glutamine amidotransferase type-1 domain in the interval 3–212 (DIAIVDYGMG…LGNFVRWKPV (210 aa)). Cysteine 82 (nucleophile) is an active-site residue. Catalysis depends on residues histidine 191 and glutamate 193.

In terms of assembly, heterodimer of HisH and HisF.

The protein localises to the cytoplasm. It carries out the reaction 5-[(5-phospho-1-deoxy-D-ribulos-1-ylimino)methylamino]-1-(5-phospho-beta-D-ribosyl)imidazole-4-carboxamide + L-glutamine = D-erythro-1-(imidazol-4-yl)glycerol 3-phosphate + 5-amino-1-(5-phospho-beta-D-ribosyl)imidazole-4-carboxamide + L-glutamate + H(+). It catalyses the reaction L-glutamine + H2O = L-glutamate + NH4(+). Its pathway is amino-acid biosynthesis; L-histidine biosynthesis; L-histidine from 5-phospho-alpha-D-ribose 1-diphosphate: step 5/9. In terms of biological role, IGPS catalyzes the conversion of PRFAR and glutamine to IGP, AICAR and glutamate. The HisH subunit catalyzes the hydrolysis of glutamine to glutamate and ammonia as part of the synthesis of IGP and AICAR. The resulting ammonia molecule is channeled to the active site of HisF. This Nitrosospira multiformis (strain ATCC 25196 / NCIMB 11849 / C 71) protein is Imidazole glycerol phosphate synthase subunit HisH.